Reading from the N-terminus, the 955-residue chain is Vacuolar membrane protease (955 aa).

The Cytoplasmic segment spans residues 1–16; the sequence is MASLRLPRANPLAFTR. The chain crosses the membrane as a helical span at residues 17-37; the sequence is WPVTVITAIVYLALLIPLLVV. The Vacuolar segment spans residues 38-390; sequence HHVVPSAPSS…STFVLFQLHT (353 aa). N-linked (GlcNAc...) asparagine glycosylation is found at Asn53 and Asn119. Residues His174 and Asp186 each contribute to the Zn(2+) site. The active-site Proton acceptor is the Glu220. 3 residues coordinate Zn(2+): Glu221, Glu246, and His319. The chain crosses the membrane as a helical span at residues 391-411; that stretch reads LFALLVTLLIVGPLTLLFTSI. Residues 412–442 lie on the Cytoplasmic side of the membrane; the sequence is ALTKADKMYLFRSSAKSEDRLDVVPLQGLRG. Residues 443–463 form a helical membrane-spanning segment; the sequence is FFRFPFLFGIPTVVTVGLAYL. The Vacuolar segment spans residues 464 to 473; sequence VTKVNPYIIH. Residues 474–494 traverse the membrane as a helical segment; the sequence is SSAYAVWSMMVAAWVFLAWFV. Over 495-508 the chain is Cytoplasmic; sequence SRVADFARPSAFHR. The chain crosses the membrane as a helical span at residues 509-529; that stretch reads IYTLTWMYVLSWVSAVIATVY. The Vacuolar portion of the chain corresponds to 530-533; the sequence is ANQR. The helical transmembrane segment at 534–554 threads the bilayer; the sequence is GLAGGYFIFFFHAGIFLAKWI. At 555–656 the chain is on the cytoplasmic side; that stretch reads SYLELFALPS…WSYALPKWTW (102 aa). A compositionally biased stretch (low complexity) spans 574 to 590; it reads SASGRASGHGSRRGTTS. A disordered region spans residues 574 to 611; the sequence is SASGRASGHGSRRGTTSGEDDGEEAEEEPTESTSLLGS. Positions 591 to 603 are enriched in acidic residues; sequence GEDDGEEAEEEPT. A helical transmembrane segment spans residues 657 to 677; that stretch reads VLQLLLTAPITLIMVGPLALL. Residues 678–693 are Vacuolar-facing; it reads TISAISQTGQDGGHPL. The helical transmembrane segment at 694-714 threads the bilayer; sequence FAYVAIAIFTTIMLTPLLPFI. The Cytoplasmic portion of the chain corresponds to 715-721; it reads HRYTYHV. Residues 722–742 traverse the membrane as a helical segment; sequence PLFLLAVFLGTLIYNLVAFPF. Residues 743 to 955 are Vacuolar-facing; the sequence is SDSNRLKLYY…RRAFEIGNDD (213 aa). The N-linked (GlcNAc...) asparagine glycan is linked to Asn826.

It belongs to the peptidase M28 family. Zn(2+) is required as a cofactor.

Its subcellular location is the vacuole membrane. Functionally, may be involved in vacuolar sorting and osmoregulation. The chain is Vacuolar membrane protease from Aspergillus oryzae (strain ATCC 42149 / RIB 40) (Yellow koji mold).